The sequence spans 307 residues: Methionyl-tRNA formyltransferase (307 aa).

Residue 109–112 (SLLP) coordinates (6S)-5,6,7,8-tetrahydrofolate.

Belongs to the Fmt family.

The enzyme catalyses L-methionyl-tRNA(fMet) + (6R)-10-formyltetrahydrofolate = N-formyl-L-methionyl-tRNA(fMet) + (6S)-5,6,7,8-tetrahydrofolate + H(+). Attaches a formyl group to the free amino group of methionyl-tRNA(fMet). The formyl group appears to play a dual role in the initiator identity of N-formylmethionyl-tRNA by promoting its recognition by IF2 and preventing the misappropriation of this tRNA by the elongation apparatus. This Dechloromonas aromatica (strain RCB) protein is Methionyl-tRNA formyltransferase.